We begin with the raw amino-acid sequence, 485 residues long: Glutamyl-tRNA(Gln) amidotransferase subunit A (485 aa).

Active-site charge relay system residues include Lys-80 and Ser-155. The active-site Acyl-ester intermediate is the Ser-179.

It belongs to the amidase family. GatA subfamily. Heterotrimer of A, B and C subunits.

It carries out the reaction L-glutamyl-tRNA(Gln) + L-glutamine + ATP + H2O = L-glutaminyl-tRNA(Gln) + L-glutamate + ADP + phosphate + H(+). Allows the formation of correctly charged Gln-tRNA(Gln) through the transamidation of misacylated Glu-tRNA(Gln) in organisms which lack glutaminyl-tRNA synthetase. The reaction takes place in the presence of glutamine and ATP through an activated gamma-phospho-Glu-tRNA(Gln). The protein is Glutamyl-tRNA(Gln) amidotransferase subunit A of Leptospira borgpetersenii serovar Hardjo-bovis (strain L550).